The sequence spans 593 residues: Auxin response factor 12 (593 aa).

The segment at residues phenylalanine 126 to arginine 228 is a DNA-binding region (TF-B3). The region spanning arginine 511 to arginine 592 is the PB1 domain.

It belongs to the ARF family. In terms of assembly, homodimers and heterodimers.

Its subcellular location is the nucleus. In terms of biological role, auxin response factors (ARFs) are transcriptional factors that bind specifically to the DNA sequence 5'-TGTCTC-3' found in the auxin-responsive promoter elements (AuxREs). Could act as transcriptional activator or repressor. Formation of heterodimers with Aux/IAA proteins may alter their ability to modulate early auxin response genes expression. This chain is Auxin response factor 12 (ARF12), found in Arabidopsis thaliana (Mouse-ear cress).